Reading from the N-terminus, the 211-residue chain is ATP phosphoribosyltransferase (211 aa).

This sequence belongs to the ATP phosphoribosyltransferase family. Short subfamily. As to quaternary structure, heteromultimer composed of HisG and HisZ subunits.

The protein resides in the cytoplasm. The enzyme catalyses 1-(5-phospho-beta-D-ribosyl)-ATP + diphosphate = 5-phospho-alpha-D-ribose 1-diphosphate + ATP. It functions in the pathway amino-acid biosynthesis; L-histidine biosynthesis; L-histidine from 5-phospho-alpha-D-ribose 1-diphosphate: step 1/9. Functionally, catalyzes the condensation of ATP and 5-phosphoribose 1-diphosphate to form N'-(5'-phosphoribosyl)-ATP (PR-ATP). Has a crucial role in the pathway because the rate of histidine biosynthesis seems to be controlled primarily by regulation of HisG enzymatic activity. The chain is ATP phosphoribosyltransferase from Bacillus cereus (strain ATCC 14579 / DSM 31 / CCUG 7414 / JCM 2152 / NBRC 15305 / NCIMB 9373 / NCTC 2599 / NRRL B-3711).